The following is a 512-amino-acid chain: MNKHVEAEWRFPAKTAWAIFAAMIFGNFMAILDIQIVASSLNEVQAGMSASRYEVTWVQTVYLIAEIIAIPMSSIVSRVLSTRVYYTMCAIGFTVSSLLCALSWNLESLLVFRGIQGFMGGGMIPTSMTALYLLFPEPKRSLPLVMFGMISTLGPAIGPTIGGWLTNNFSWHWMFLINIIPGIIIATVIYSGPNIDRANYSLIKSMDWFSLVGMAMFLGGLEYFLDEGARHDWLADTGVRIAFMVCVVGGMIFFSRSFTQPKPLLDLSVFKNKNFTLSAITTFVIGMALYGLGYMIPVFLGQVREMNSSQIGHVMMVTGIVMFCFAPFLAWLIPNFDTRKTVFVGMILAGFGVWLNSHLSIHSDYDFMFWPQIYRGIGLMICLIVVSHLAMSTLPLSKVADASGIYNLMRNIGGAVGLALINSSLDWLTAMHVTQINQSMTPQNWIFTERLDQLTAQYQEVGTNAQQIALSVIYRDIHFQALTSSFNDLLRMLAIIMFVTAFLTIFMDRGKK.

A run of 14 helical transmembrane segments spans residues 17–37 (WAIF…IQIV), 55–75 (VTWV…MSSI), 84–104 (VYYT…ALSW), 115–135 (IQGF…YLLF), 144–164 (LVMF…IGGW), 169–189 (FSWH…ATVI), 205–225 (SMDW…EYFL), 234–254 (LADT…MIFF), 280–300 (ITTF…PVFL), 314–334 (VMMV…WLIP), 341–361 (TVFV…HLSI), 376–396 (GIGL…TLPL), 412–432 (IGGA…TAMH), and 486–506 (FNDL…LTIF).

It belongs to the major facilitator superfamily. EmrB family.

Its subcellular location is the cell inner membrane. Its function is as follows. Probably part of an efflux pump system that contributes to adaptation to osmotic stress and resistance to colistin. This Acinetobacter baumannii (strain ATCC 17978 / DSM 105126 / CIP 53.77 / LMG 1025 / NCDC KC755 / 5377) protein is Colistin resistance protein EmrB.